Here is a 120-residue protein sequence, read N- to C-terminus: Large ribosomal subunit protein bL20 (120 aa).

The protein belongs to the bacterial ribosomal protein bL20 family.

In terms of biological role, binds directly to 23S ribosomal RNA and is necessary for the in vitro assembly process of the 50S ribosomal subunit. It is not involved in the protein synthesizing functions of that subunit. This Methylacidiphilum infernorum (isolate V4) (Methylokorus infernorum (strain V4)) protein is Large ribosomal subunit protein bL20.